The primary structure comprises 119 residues: Beta-2-microglobulin (119 aa).

An N-terminal signal peptide occupies residues 1 to 20; the sequence is MARFVVAALLVLLCLSGLEA. Positions 25 to 114 constitute an Ig-like C1-type domain; the sequence is PKIQVYSRHP…VTFPTPKTVK (90 aa). Cys45 and Cys100 are joined by a disulfide.

This sequence belongs to the beta-2-microglobulin family. In terms of assembly, heterodimer of an alpha chain and a beta chain. Beta-2-microglobulin is the beta-chain of major histocompatibility complex class I molecules.

It localises to the secreted. Component of the class I major histocompatibility complex (MHC). Involved in the presentation of peptide antigens to the immune system. This chain is Beta-2-microglobulin (B2M), found in Cebus albifrons (White-fronted capuchin).